The primary structure comprises 508 residues: Cobyric acid synthase (508 aa).

Residues 255–454 (ELNIAVLKLP…LHGVFESGPW (200 aa)) form the GATase cobBQ-type domain. Cys-336 acts as the Nucleophile in catalysis. The active site involves His-446.

The protein belongs to the CobB/CobQ family. CobQ subfamily.

It functions in the pathway cofactor biosynthesis; adenosylcobalamin biosynthesis. Functionally, catalyzes amidations at positions B, D, E, and G on adenosylcobyrinic A,C-diamide. NH(2) groups are provided by glutamine, and one molecule of ATP is hydrogenolyzed for each amidation. In Synechococcus sp. (strain CC9311), this protein is Cobyric acid synthase.